A 479-amino-acid chain; its full sequence is Ribosomal RNA small subunit methyltransferase F (479 aa).

S-adenosyl-L-methionine contacts are provided by residues 125-131 (AAAPGSK), glutamate 149, aspartate 176, and aspartate 194. The active-site Nucleophile is cysteine 247.

This sequence belongs to the class I-like SAM-binding methyltransferase superfamily. RsmB/NOP family.

It is found in the cytoplasm. The catalysed reaction is cytidine(1407) in 16S rRNA + S-adenosyl-L-methionine = 5-methylcytidine(1407) in 16S rRNA + S-adenosyl-L-homocysteine + H(+). Functionally, specifically methylates the cytosine at position 1407 (m5C1407) of 16S rRNA. The chain is Ribosomal RNA small subunit methyltransferase F from Salmonella paratyphi B (strain ATCC BAA-1250 / SPB7).